We begin with the raw amino-acid sequence, 289 residues long: Iodotyrosine deiodinase 1 (289 aa).

Residues 1 to 21 (MYFLTPILVAILCILVVWIFK) traverse the membrane as a helical segment. A compositionally biased stretch (basic and acidic residues) spans 29–58 (KKKGEPRTRAEARPWVDEDLKDSSDLHQAE). Positions 29–69 (KKKGEPRTRAEARPWVDEDLKDSSDLHQAEEDADEWQESEE) are disordered. The segment covering 59-69 (EDADEWQESEE) has biased composition (acidic residues). FMN is bound by residues 100–104 (RRSVR), Ser128, and 128–129 (SG). 3-iodo-L-tyrosine is bound by residues Ala130, Glu157, Tyr161, and Lys182. FMN contacts are provided by residues 237–239 (TTT) and Arg279.

It belongs to the nitroreductase family. In terms of assembly, homodimer. Requires FMN as cofactor. Expressed at a high level in thyroid gland (at protein level). Expressed at a high level in thyroid gland and at lower level in kidney and trachea.

The protein localises to the cell membrane. The protein resides in the cytoplasmic vesicle membrane. It carries out the reaction 2 iodide + L-tyrosine + 2 NADP(+) = 3,5-diiodo-L-tyrosine + 2 NADPH + H(+). The enzyme catalyses iodide + L-tyrosine + NADP(+) = 3-iodo-L-tyrosine + NADPH. It catalyses the reaction 3-iodo-L-tyrosine + iodide + NADP(+) = 3,5-diiodo-L-tyrosine + NADPH + H(+). The catalysed reaction is L-tyrosine + chloride + NADP(+) = 3-chloro-L-tyrosine + NADPH. It carries out the reaction bromide + L-tyrosine + NADP(+) = 3-bromo-L-tyrosine + NADPH. Catalyzes the dehalogenation of halotyrosines such as 3-bromo-L-tyrosine, 3-chloro-L-tyrosine, 3-iodo-L-tyrosine and 3,5-diiodo-L-tyrosine. During thyroid hormone biosynthesis, facilitates iodide salvage by catalysing the oxidative NADPH-dependent deiodination of the halogenated by-products of thyroid hormone production, monoiodotyrosine (L-MIT) and diiodotyrosine (L-DIT). The scavanged iodide can then reenter the hormone-producing pathways. Acts more efficiently on 3-iodo-L-tyrosine than 3,5-diiodo-L-tyrosine. The sequence is that of Iodotyrosine deiodinase 1 from Homo sapiens (Human).